The sequence spans 345 residues: Protein arginine N-methyltransferase 1 (345 aa).

The SAM-dependent MTase PRMT-type domain maps to 24–345; that stretch reads ADYYFDSYSH…VKNTQQYRMR (322 aa). 5 residues coordinate S-adenosyl-L-methionine: H37, R46, G70, E92, and E121. Active-site residues include E136 and E145.

This sequence belongs to the class I-like SAM-binding methyltransferase superfamily. Protein arginine N-methyltransferase family. In terms of processing, phosphorylated during flagellum resorption.

It localises to the nucleus. Its subcellular location is the cell projection. The protein localises to the cilium. It is found in the flagellum. It carries out the reaction L-arginyl-[protein] + S-adenosyl-L-methionine = N(omega)-methyl-L-arginyl-[protein] + S-adenosyl-L-homocysteine + H(+). The enzyme catalyses L-arginyl-[protein] + 2 S-adenosyl-L-methionine = N(omega),N(omega)-dimethyl-L-arginyl-[protein] + 2 S-adenosyl-L-homocysteine + 2 H(+). Functionally, arginine methyltransferase that methylates (mono and asymmetric dimethylation) the guanidino nitrogens of arginyl residues present in target proteins. Mediates asymmetric dimethylation of components of the axoneme during flagellum resorption, such as CCDC40/FAP172, CCDC65/FAP250, RSP1, RSP2, RPS5, RSP6, and tektin. The sequence is that of Protein arginine N-methyltransferase 1 (PRMT1) from Chlamydomonas reinhardtii (Chlamydomonas smithii).